The following is a 316-amino-acid chain: ATP synthase gamma chain (316 aa).

Belongs to the ATPase gamma chain family. In terms of assembly, F-type ATPases have 2 components, CF(1) - the catalytic core - and CF(0) - the membrane proton channel. CF(1) has five subunits: alpha(3), beta(3), gamma(1), delta(1), epsilon(1). CF(0) has three main subunits: a, b and c.

It is found in the cellular thylakoid membrane. Its function is as follows. Produces ATP from ADP in the presence of a proton gradient across the membrane. The gamma chain is believed to be important in regulating ATPase activity and the flow of protons through the CF(0) complex. In Prochlorococcus marinus (strain MIT 9211), this protein is ATP synthase gamma chain.